We begin with the raw amino-acid sequence, 428 residues long: Histidine--tRNA ligase (428 aa).

Belongs to the class-II aminoacyl-tRNA synthetase family. In terms of assembly, homodimer.

It localises to the cytoplasm. It carries out the reaction tRNA(His) + L-histidine + ATP = L-histidyl-tRNA(His) + AMP + diphosphate + H(+). The sequence is that of Histidine--tRNA ligase from Lactobacillus helveticus (strain DPC 4571).